The following is a 128-amino-acid chain: Small ribosomal subunit protein eS8 (128 aa).

The interval 1–37 (MGYFQGNDFRKITGGKKGKHRDKRKFELGSPPTETKL) is disordered. Residues 13 to 23 (TGGKKGKHRDK) show a composition bias toward basic residues.

The protein belongs to the eukaryotic ribosomal protein eS8 family. Part of the 30S ribosomal subunit.

In Sulfurisphaera tokodaii (strain DSM 16993 / JCM 10545 / NBRC 100140 / 7) (Sulfolobus tokodaii), this protein is Small ribosomal subunit protein eS8.